The sequence spans 314 residues: Protoheme IX farnesyltransferase (314 aa).

The next 8 membrane-spanning stretches (helical) occupy residues 31 to 51 (VMSLVIFTALVGMAMAPGHFH), 52 to 72 (PVLAITSLLCIAVGAGASGAL), 119 to 139 (ILVNWIAGALLAFTIFFYVVI), 152 to 172 (IVIGGAAGALPPVVAWAAVTG), 179 to 199 (LLLFAIIFFWTPPHFWALALF), 225 to 245 (ILLYTIVLIAVAAAPWALGYF), 247 to 267 (AVYGVVSLILGAGMLVLAINV), and 284 to 304 (FAFSILYLFALFATLLAEVVF).

Belongs to the UbiA prenyltransferase family. Protoheme IX farnesyltransferase subfamily.

The protein resides in the cell inner membrane. It catalyses the reaction heme b + (2E,6E)-farnesyl diphosphate + H2O = Fe(II)-heme o + diphosphate. The protein operates within porphyrin-containing compound metabolism; heme O biosynthesis; heme O from protoheme: step 1/1. Its function is as follows. Converts heme B (protoheme IX) to heme O by substitution of the vinyl group on carbon 2 of heme B porphyrin ring with a hydroxyethyl farnesyl side group. In Bradyrhizobium diazoefficiens (strain JCM 10833 / BCRC 13528 / IAM 13628 / NBRC 14792 / USDA 110), this protein is Protoheme IX farnesyltransferase.